The sequence spans 606 residues: Flagellar WD repeat-containing protein Pf20 (606 aa).

Residues 229–250 (PLPGAERSLGGQSTAAAGGGAS) are disordered. WD repeat units lie at residues 324–354 (GHLLSVANLALHPTKPILVTASDDKTWKMWH), 366–396 (GHKDWVAGVDFHPAGTCLASGGGDSAVKIWD), 408–438 (DHKQAIWSVRFHHLGEVVASGSLDHTVRLWD), 450–480 (GHVDSVNDLAWQPFSSSLATASSDKTVSVWD), 492–522 (GHQNSCNGVSFNILGTQLASTDADGVVKLWD), 534–564 (TGKHPANKSCFDRSGQVLAVACDDGKVKAYS), and 576–606 (GHEDAVQAVLFDPAGQYLVSCGSDNTFRLWS).

Inter-microtubule bridges in flagella.

It localises to the cell projection. It is found in the cilium. Its subcellular location is the flagellum. This Chlamydomonas reinhardtii (Chlamydomonas smithii) protein is Flagellar WD repeat-containing protein Pf20 (PF20).